A 246-amino-acid polypeptide reads, in one-letter code: 5-oxoprolinase subunit A (246 aa).

This sequence belongs to the LamB/PxpA family. In terms of assembly, forms a complex composed of PxpA, PxpB and PxpC.

The enzyme catalyses 5-oxo-L-proline + ATP + 2 H2O = L-glutamate + ADP + phosphate + H(+). Functionally, catalyzes the cleavage of 5-oxoproline to form L-glutamate coupled to the hydrolysis of ATP to ADP and inorganic phosphate. The chain is 5-oxoprolinase subunit A from Cupriavidus necator (strain ATCC 17699 / DSM 428 / KCTC 22496 / NCIMB 10442 / H16 / Stanier 337) (Ralstonia eutropha).